Reading from the N-terminus, the 121-residue chain is Small ribosomal subunit protein uS12c (121 aa).

The protein belongs to the universal ribosomal protein uS12 family. In terms of assembly, part of the 30S ribosomal subunit.

The protein localises to the plastid. The protein resides in the chloroplast. Functionally, with S4 and S5 plays an important role in translational accuracy. Located at the interface of the 30S and 50S subunits. The chain is Small ribosomal subunit protein uS12c (rps12) from Bigelowiella natans (Pedinomonas minutissima).